The chain runs to 514 residues: 2,3-bisphosphoglycerate-independent phosphoglycerate mutase (514 aa).

Residues Asp13 and Ser63 each coordinate Mn(2+). Residue Ser63 is the Phosphoserine intermediate of the active site. Residues His124, 154–155 (RD), Arg186, Arg192, 258–261 (RADR), and Lys332 contribute to the substrate site. Mn(2+) is bound by residues Asp399, His403, Asp440, His441, and His459.

It belongs to the BPG-independent phosphoglycerate mutase family. Monomer. The cofactor is Mn(2+).

It carries out the reaction (2R)-2-phosphoglycerate = (2R)-3-phosphoglycerate. It participates in carbohydrate degradation; glycolysis; pyruvate from D-glyceraldehyde 3-phosphate: step 3/5. Functionally, catalyzes the interconversion of 2-phosphoglycerate and 3-phosphoglycerate. This Legionella pneumophila (strain Lens) protein is 2,3-bisphosphoglycerate-independent phosphoglycerate mutase.